The primary structure comprises 239 residues: 4-hydroxy-tetrahydrodipicolinate reductase (239 aa).

Residues glycine 8–methionine 13, glycine 78–threonine 80, and serine 102–methionine 105 contribute to the NAD(+) site. The Proton donor/acceptor role is filled by histidine 134. Histidine 135 lines the (S)-2,3,4,5-tetrahydrodipicolinate pocket. The active-site Proton donor is the lysine 138. Glycine 144–threonine 145 lines the (S)-2,3,4,5-tetrahydrodipicolinate pocket.

This sequence belongs to the DapB family.

The protein localises to the cytoplasm. It catalyses the reaction (S)-2,3,4,5-tetrahydrodipicolinate + NAD(+) + H2O = (2S,4S)-4-hydroxy-2,3,4,5-tetrahydrodipicolinate + NADH + H(+). The catalysed reaction is (S)-2,3,4,5-tetrahydrodipicolinate + NADP(+) + H2O = (2S,4S)-4-hydroxy-2,3,4,5-tetrahydrodipicolinate + NADPH + H(+). It functions in the pathway amino-acid biosynthesis; L-lysine biosynthesis via DAP pathway; (S)-tetrahydrodipicolinate from L-aspartate: step 4/4. Functionally, catalyzes the conversion of 4-hydroxy-tetrahydrodipicolinate (HTPA) to tetrahydrodipicolinate. The sequence is that of 4-hydroxy-tetrahydrodipicolinate reductase from Rickettsia africae (strain ESF-5).